The following is a 299-amino-acid chain: ATP phosphoribosyltransferase (299 aa).

This sequence belongs to the ATP phosphoribosyltransferase family. Long subfamily. In terms of assembly, equilibrium between an active dimeric form, an inactive hexameric form and higher aggregates. Interconversion between the various forms is largely reversible and is influenced by the natural substrates and inhibitors of the enzyme. Mg(2+) is required as a cofactor.

Its subcellular location is the cytoplasm. It carries out the reaction 1-(5-phospho-beta-D-ribosyl)-ATP + diphosphate = 5-phospho-alpha-D-ribose 1-diphosphate + ATP. Its pathway is amino-acid biosynthesis; L-histidine biosynthesis; L-histidine from 5-phospho-alpha-D-ribose 1-diphosphate: step 1/9. Feedback inhibited by histidine. Its function is as follows. Catalyzes the condensation of ATP and 5-phosphoribose 1-diphosphate to form N'-(5'-phosphoribosyl)-ATP (PR-ATP). Has a crucial role in the pathway because the rate of histidine biosynthesis seems to be controlled primarily by regulation of HisG enzymatic activity. This Buchnera aphidicola subsp. Acyrthosiphon pisum (strain 5A) protein is ATP phosphoribosyltransferase.